A 185-amino-acid polypeptide reads, in one-letter code: MTNTIIEKAKERFAHTHESLAREFGAIRAGRANASLLDRITVEYYGAPTPLNQLASITVPEARVLLISPFDKGSIADIERAINESDLGINPANDGSVIRLVIPALTEETRKELAKEVKKVGENAKIAIRNIRRDAMDEAKKQEKEKEITEDQLKTLEKDIQKATDDAVNKIDSMIAEKEKELLTV.

Belongs to the RRF family.

The protein localises to the cytoplasm. Functionally, responsible for the release of ribosomes from messenger RNA at the termination of protein biosynthesis. May increase the efficiency of translation by recycling ribosomes from one round of translation to another. The chain is Ribosome-recycling factor from Streptococcus thermophilus (strain CNRZ 1066).